Consider the following 4760-residue polypeptide: Nonribosomal peptide synthetase cm3A (4760 aa).

Residues 1–12 (MKHLASSENMPT) are compositionally biased toward polar residues. The segment at 1–24 (MKHLASSENMPTPAQDRAPSPSAM) is disordered. Positions 19 to 95 (PSPSAMQQEI…ELSRSAECQL (77 aa)) constitute a Carrier 1 domain. S56 carries the post-translational modification O-(pantetheine 4'-phosphoryl)serine. Condensation regions lie at residues 142 to 570 (QDIF…EIEQ) and 178 to 571 (PGLS…IEQL). Positions 591 to 984 (DEQARLCPDA…GRRDTQVKLR (394 aa)) are adenylation 1. The 78-residue stretch at 1120 to 1197 (REATTLQLQI…KLTEKLGVPE (78 aa)) folds into the Carrier 2 domain. S1158 is modified (O-(pantetheine 4'-phosphoryl)serine). Condensation stretches follow at residues 1210-1654 (FPLS…KTPS) and 1689-2125 (VEDM…NVTT). Residues 2171–2551 (DGDLTYFELD…DRKDWQIKIR (381 aa)) form an adenylation 2 region. The Carrier 3 domain maps to 2684 to 2762 (LPSSETEKTV…ELAHAIDQRS (79 aa)). O-(pantetheine 4'-phosphoryl)serine is present on S2721. Residues 2811 to 3203 (VEDIYPCTPL…RFKHIFGQLS (393 aa)) are condensation 4. Residues 3255-3647 (SATTPDRPAV…GRADQQLKIR (393 aa)) are adenylation 3. The 75-residue stretch at 3783–3857 (TRTEELMQSV…QLAQRATTDA (75 aa)) folds into the Carrier 4 domain. 2 condensation regions span residues 3869 to 4296 (EFRL…TLLC) and 4340 to 4757 (EDIY…EEMG).

The protein belongs to the nrps family.

It participates in secondary metabolite biosynthesis. Its function is as follows. Nonribosomal peptide synthetase; part of the gene cluster that mediates the biosynthesis of beauveriolides I and III, cyclodepsipeptides acting as inhibitors of the acyl-CoA:cholesterol acyltransferase. The HR-PKS cm3B initiates the biosynthesis of beauveriolides by iteratively catalyzing the formation of the linear polyketide chain. The ATP-dependent acetyl-CoA ligase cm3D converts the polyketide carboxylic acid to a CoA thioester which id shuttled to the first T domain in the NRPS cm3A by the acetyltransferase cm3C. Cm3A contains 13 domains and assembles the polyketide chain, L-phenylalanine, L-alanine, and D-leucine (or D-allo-isoleucine) to form beauveriolide I (or beauveriolide III). The production of both beauveriolides I and III suggests the substrate adaptability of cm3B, using different amino acids as substrates. This is Nonribosomal peptide synthetase cm3A from Cordyceps militaris (strain CM01) (Caterpillar fungus).